The following is a 372-amino-acid chain: tRNA-specific 2-thiouridylase MnmA (372 aa).

Residues 16-23 (GMSGGVDS) and M42 each bind ATP. Residues 102 to 104 (NPD) form an interaction with target base in tRNA region. The Nucleophile role is filled by C107. C107 and C205 form a disulfide bridge. An ATP-binding site is contributed by G132. Positions 155–157 (KDQ) are interaction with tRNA. The active-site Cysteine persulfide intermediate is the C205. The segment at 317 to 318 (RY) is interaction with tRNA.

Belongs to the MnmA/TRMU family.

The protein localises to the cytoplasm. It catalyses the reaction S-sulfanyl-L-cysteinyl-[protein] + uridine(34) in tRNA + AH2 + ATP = 2-thiouridine(34) in tRNA + L-cysteinyl-[protein] + A + AMP + diphosphate + H(+). In terms of biological role, catalyzes the 2-thiolation of uridine at the wobble position (U34) of tRNA, leading to the formation of s(2)U34. The chain is tRNA-specific 2-thiouridylase MnmA from Shewanella baltica (strain OS195).